Here is a 224-residue protein sequence, read N- to C-terminus: MSLMNLPEESRPREKLLALGPKSLTDAELLAIFLRTGIKGMNAIELADKLLKEFGSLRKLLGSNENEFCSHKGLGTAKFAQLQAVVEMTERYLFEKIEKEDALTSPEHTKRYLTRILRDRHREAFYVLFLDNQHRVLKGEVLFEGTIDAAAVYPREVVKRSIDYNAAAIILAHNHPSGVAEPSQADRRITKRISDAVELVDIRVLDHFVIGDGEIVSFAERGWI.

One can recognise an MPN domain in the interval alanine 102–isoleucine 224. Positions 173, 175, and 186 each coordinate Zn(2+). The JAMM motif motif lies at histidine 173–aspartate 186.

Belongs to the UPF0758 family.

This chain is UPF0758 protein VSAL_I0192, found in Aliivibrio salmonicida (strain LFI1238) (Vibrio salmonicida (strain LFI1238)).